The primary structure comprises 168 residues: uncharacterized protein (168 aa).

It is found in the mitochondrion. This is an uncharacterized protein from Marchantia polymorpha (Common liverwort).